Consider the following 394-residue polypeptide: Phloroisovalerophenone synthase (394 aa).

The active site involves Cys-166.

The protein belongs to the thiolase-like superfamily. Chalcone/stilbene synthases family. As to quaternary structure, homodimer. Expressed in lupulin gland. Present at low levels in leaves but accumulates in cones.

It catalyses the reaction 3-methylbutanoyl-CoA + 3 malonyl-CoA + 3 H(+) = phlorisovalerophenone + 3 CO2 + 4 CoA. It carries out the reaction (E)-4-coumaroyl-CoA + 3 malonyl-CoA + 3 H(+) = 2',4,4',6'-tetrahydroxychalcone + 3 CO2 + 4 CoA. The catalysed reaction is 2-methylpropanoyl-CoA + 3 malonyl-CoA + 3 H(+) = phlorisobutanophenone + 3 CO2 + 4 CoA. It participates in secondary metabolite biosynthesis. Involved in the biosynthesis of prenylated phenolics natural products which contribute to the bitter taste of beer and display broad biological activities. Polyketide synthase that can use 3-methylbutanoyl-CoA (isovaleryl-CoA) and 2-methylpropanoyl-CoA (isobutyryl-CoA) as substrates to produce phlorisovalerophenone (PIVP) and phlorisobutyrophenone (2-methyl-1-(2,4,6-trihydroxyphenyl)propan-1-one), respectively, intermediates in the biosynthesis of the bitter acids (alpha and beta) acids. Can also produce naringenin-chalcone (2',4,4',6'-tetrahydroxychalcone) from 4-coumaroyl-CoA with a lower efficiency. The sequence is that of Phloroisovalerophenone synthase from Humulus lupulus (European hop).